Reading from the N-terminus, the 720-residue chain is Protein unc-112 (720 aa).

Disordered stretches follow at residues 145-170 (DLRR…ESVG) and 210-236 (MGTL…TMRR). Positions 288–614 (WLDSSRSLME…ALPEHGIHYF (327 aa)) constitute an FERM domain. Positions 402-507 (VPELADYLKY…WMAACRLASR (106 aa)) constitute a PH domain.

Belongs to the kindlin family. As to quaternary structure, interacts with pat-4/ILK. Probably forms a complex with pat-4 and pat-6. Component of an integrin containing attachment complex, composed of at least pat-2, pat-3, pat-4, pat-6, unc-52, unc-97 and unc-112. Mainly expressed in muscle cells in both embryos and adults.

It localises to the cell membrane. Its subcellular location is the cytoplasm. It is found in the myofibril. The protein resides in the sarcomere. The protein localises to the m line. Functionally, component of an integrin containing attachment complex, which is required for muscle development and maintenance. Probable regulator of cell-extracellular matrix adhesion. Required during initial muscle assembly to form dense bodies and M-lines. In Caenorhabditis elegans, this protein is Protein unc-112.